A 455-amino-acid chain; its full sequence is MKESDSVEKRKVSMISLGCAKNLVDAEVMLGYLPQDRFEITTDEAQADIIIVNTCGFISDAKEESVETLLEAIEYKKSGNCTLLVVTGCLSQRYAEDMAKELPEVDILLGTGDVPRILELIEAHDRGEDVRQSVGLPQYLYDHTTPRVASSPFYSTYVKIAEGCNNLCSYCIIPQLRGPLRSRSIASVVAEVERLVAAGAQEVNLIAQDITAFGADRHDGASLEGLLRELVKISELRWLRLLYAYPDGISDELIELVATEEKICSYFDVPLQHIDDRVLARMNRRVGEDTIRDLIHRMRQRIPDLTLRTSFIVGFPGETDAEFAKLLAFVEEGHFDRVGVFRYSREEDTPAASLPDQVPEGVKKSRYNKLMKAQQRVSFRRNRALIGRVEPVLVEGYSEETELLLSGRSIRQAPDVDGQVYITAGQADVGQIVPLRITDSSEYDLIGEIVDESDE.

The MTTase N-terminal domain maps to 10-126 (RKVSMISLGC…ILELIEAHDR (117 aa)). Positions 19, 55, 89, 164, 168, and 171 each coordinate [4Fe-4S] cluster. A Radical SAM core domain is found at 150–380 (SSPFYSTYVK…MKAQQRVSFR (231 aa)). In terms of domain architecture, TRAM spans 383–451 (RALIGRVEPV…EYDLIGEIVD (69 aa)).

It belongs to the methylthiotransferase family. RimO subfamily. [4Fe-4S] cluster serves as cofactor.

It localises to the cytoplasm. The enzyme catalyses L-aspartate(89)-[ribosomal protein uS12]-hydrogen + (sulfur carrier)-SH + AH2 + 2 S-adenosyl-L-methionine = 3-methylsulfanyl-L-aspartate(89)-[ribosomal protein uS12]-hydrogen + (sulfur carrier)-H + 5'-deoxyadenosine + L-methionine + A + S-adenosyl-L-homocysteine + 2 H(+). Its function is as follows. Catalyzes the methylthiolation of an aspartic acid residue of ribosomal protein uS12. The protein is Ribosomal protein uS12 methylthiotransferase RimO of Syntrophotalea carbinolica (strain DSM 2380 / NBRC 103641 / GraBd1) (Pelobacter carbinolicus).